We begin with the raw amino-acid sequence, 115 residues long: Integration host factor subunit alpha (115 aa).

It belongs to the bacterial histone-like protein family. Heterodimer of an alpha and a beta chain.

Its function is as follows. This protein is one of the two subunits of integration host factor, a specific DNA-binding protein that functions in genetic recombination as well as in transcriptional and translational control. This Burkholderia pseudomallei (strain K96243) protein is Integration host factor subunit alpha.